Consider the following 302-residue polypeptide: tRNA pseudouridine synthase B (302 aa).

The Nucleophile role is filled by Asp45.

This sequence belongs to the pseudouridine synthase TruB family. Type 1 subfamily.

The catalysed reaction is uridine(55) in tRNA = pseudouridine(55) in tRNA. Functionally, responsible for synthesis of pseudouridine from uracil-55 in the psi GC loop of transfer RNAs. This is tRNA pseudouridine synthase B from Francisella tularensis subsp. tularensis (strain WY96-3418).